The chain runs to 102 residues: Small ribosomal subunit protein bS6 (102 aa).

The protein belongs to the bacterial ribosomal protein bS6 family.

Its function is as follows. Binds together with bS18 to 16S ribosomal RNA. In Desulfovibrio desulfuricans (strain ATCC 27774 / DSM 6949 / MB), this protein is Small ribosomal subunit protein bS6.